Here is a 309-residue protein sequence, read N- to C-terminus: Porphobilinogen deaminase (309 aa).

C241 is modified (S-(dipyrrolylmethanemethyl)cysteine).

This sequence belongs to the HMBS family. In terms of assembly, monomer. Dipyrromethane is required as a cofactor.

The enzyme catalyses 4 porphobilinogen + H2O = hydroxymethylbilane + 4 NH4(+). Its pathway is porphyrin-containing compound metabolism; protoporphyrin-IX biosynthesis; coproporphyrinogen-III from 5-aminolevulinate: step 2/4. Tetrapolymerization of the monopyrrole PBG into the hydroxymethylbilane pre-uroporphyrinogen in several discrete steps. This Oceanobacillus iheyensis (strain DSM 14371 / CIP 107618 / JCM 11309 / KCTC 3954 / HTE831) protein is Porphobilinogen deaminase.